The sequence spans 434 residues: MSAGTASDTTALNTFFSAQLAETDPEIAKAISQELGRQQHEIELIASENIVSRAVLEAQGSVLTNKYAEGYPGRRYYGGCQFVDIAEELAIDRAKRLFGCGFANVQPNSGSQANQGVFMALMQPGDTFLGLDLAAGGHLTHGAPPNVSGKWFKPVSYTVRREDQRIDMEQVERLAQEHKPKVIIAGGSGYPRHWDFAKFREIADSVGAYFFVDMAHFAGLVAAGLHPSPFPHAHVATTTTHKTLRGPRGGMILTNDEALAKKFNSAIFPGLQGGPLMHVIAAKAVAFGEALKPEFKIYAKQVIDNAKALADTIISGGYDITSGGTDNHLMLVDLQKKGLTGKAAEAALSRADITCNKNGVPFDPQKPTITSGIRLGTPASTTRGFGVAEFKQVGSLIVQVLDGLADKGESGDSTVEAAVKEKVHALTDRFPIYS.

(6S)-5,6,7,8-tetrahydrofolate is bound by residues Leu-133 and 137 to 139 (GHL). Lys-242 carries the post-translational modification N6-(pyridoxal phosphate)lysine.

The protein belongs to the SHMT family. In terms of assembly, homodimer. The cofactor is pyridoxal 5'-phosphate.

Its subcellular location is the cytoplasm. It catalyses the reaction (6R)-5,10-methylene-5,6,7,8-tetrahydrofolate + glycine + H2O = (6S)-5,6,7,8-tetrahydrofolate + L-serine. The protein operates within one-carbon metabolism; tetrahydrofolate interconversion. It functions in the pathway amino-acid biosynthesis; glycine biosynthesis; glycine from L-serine: step 1/1. Catalyzes the reversible interconversion of serine and glycine with tetrahydrofolate (THF) serving as the one-carbon carrier. This reaction serves as the major source of one-carbon groups required for the biosynthesis of purines, thymidylate, methionine, and other important biomolecules. Also exhibits THF-independent aldolase activity toward beta-hydroxyamino acids, producing glycine and aldehydes, via a retro-aldol mechanism. The polypeptide is Serine hydroxymethyltransferase (Methylorubrum populi (strain ATCC BAA-705 / NCIMB 13946 / BJ001) (Methylobacterium populi)).